The chain runs to 540 residues: Keratin, type II cytoskeletal 73 (540 aa).

Residues 1-131 (MSRQFTYKSG…DPEIQKVRAQ (131 aa)) form a head region. The segment at 132 to 167 (EREQIKVLNNKFASFIDKVRFLEQQNQVLETKWELL) is coil 1A. The IF rod domain occupies 132–445 (EREQIKVLNN…KLLEGEECRM (314 aa)). The segment at 168-186 (QQLDLNNCKNNLEPILEGY) is linker 1. The interval 187–278 (ISNLRKQLET…CLYEGETAQI (92 aa)) is coil 1B. The tract at residues 279 to 302 (QSHISDTSIILSMDNNRNLDLDSI) is linker 12. The coil 2 stretch occupies residues 303-441 (IAEVRAQYEE…ATYRKLLEGE (139 aa)). Residues 442 to 540 (ECRMSGEYTN…LSSPTKKTMR (99 aa)) form a tail region. The tract at residues 502 to 540 (SGNCSPRGEARTRLGSASEFRDSQGKTLALSSPTKKTMR) is disordered. A compositionally biased stretch (polar residues) spans 526 to 540 (GKTLALSSPTKKTMR).

This sequence belongs to the intermediate filament family. In terms of assembly, heterotetramer of two type I and two type II keratins. As to expression, highly expressed in hair follicles from scalp. In hair, it is specifically present in the inner root sheath (IRS) of the hair follicle. Present in the IRS cuticle, but not in Henle or Huxley layers of the IRS. In the IRS cuticle, it is expressed between the lowermost bulb region of the cuticle and the region where Henle cells undergo abrupt terminal differentiation. Detected up to the uppermost cortex region where cuticle cells terminally differentiate (at protein level).

Has a role in hair formation. Specific component of keratin intermediate filaments in the inner root sheath (IRS) of the hair follicle. The chain is Keratin, type II cytoskeletal 73 (KRT73) from Homo sapiens (Human).